A 278-amino-acid chain; its full sequence is Phosphatidylglycerol--prolipoprotein diacylglyceryl transferase (278 aa).

The next 4 membrane-spanning stretches (helical) occupy residues 18–38 (IQVH…TILA), 55–75 (LILW…VIFE), 90–110 (WDGG…VYLF), and 115–135 (WIPV…AQGI). Position 137 (Arg-137) interacts with a 1,2-diacyl-sn-glycero-3-phospho-(1'-sn-glycerol). The next 3 membrane-spanning stretches (helical) occupy residues 177-197 (QPTF…LMSL), 207-227 (GEVF…VEGM), and 237-257 (IRVS…ILVF).

Belongs to the Lgt family.

It localises to the cell membrane. It catalyses the reaction L-cysteinyl-[prolipoprotein] + a 1,2-diacyl-sn-glycero-3-phospho-(1'-sn-glycerol) = an S-1,2-diacyl-sn-glyceryl-L-cysteinyl-[prolipoprotein] + sn-glycerol 1-phosphate + H(+). It functions in the pathway protein modification; lipoprotein biosynthesis (diacylglyceryl transfer). Catalyzes the transfer of the diacylglyceryl group from phosphatidylglycerol to the sulfhydryl group of the N-terminal cysteine of a prolipoprotein, the first step in the formation of mature lipoproteins. This is Phosphatidylglycerol--prolipoprotein diacylglyceryl transferase from Pediococcus pentosaceus (strain ATCC 25745 / CCUG 21536 / LMG 10740 / 183-1w).